The chain runs to 382 residues: D-galactonate dehydratase (382 aa).

Asp183 lines the Mg(2+) pocket. His185 (proton donor) is an active-site residue. Mg(2+) is bound by residues Glu209 and Glu235. His285 functions as the Proton acceptor in the catalytic mechanism.

The protein belongs to the mandelate racemase/muconate lactonizing enzyme family. GalD subfamily. Requires Mg(2+) as cofactor.

The enzyme catalyses D-galactonate = 2-dehydro-3-deoxy-D-galactonate + H2O. Its pathway is carbohydrate acid metabolism; D-galactonate degradation; D-glyceraldehyde 3-phosphate and pyruvate from D-galactonate: step 1/3. Its function is as follows. Catalyzes the dehydration of D-galactonate to 2-keto-3-deoxy-D-galactonate. This Escherichia coli (strain UTI89 / UPEC) protein is D-galactonate dehydratase.